A 298-amino-acid polypeptide reads, in one-letter code: Tritrans,polycis-undecaprenyl-diphosphate synthase (geranylgeranyl-diphosphate specific) (298 aa).

Residue Asp35 is part of the active site. Asp35 contributes to the Mg(2+) binding site. Substrate is bound by residues 36–39 (GNRR), Arg48, His52, and 80–82 (STE). Asn83 functions as the Proton acceptor in the catalytic mechanism. Residues Phe84, Arg86, Arg208, and 214-216 (RIS) contribute to the substrate site.

It belongs to the UPP synthase family. In terms of assembly, homodimer. The cofactor is Mg(2+).

It carries out the reaction geranylgeranyl diphosphate + 7 isopentenyl diphosphate = tri-trans,hepta-cis-undecaprenyl diphosphate + 7 diphosphate. Its function is as follows. Catalyzes the sequential condensation of isopentenyl diphosphate (IPP) with geranylgeranyl diphosphate (GGPP) to yield (2Z,6Z,10Z,14Z,18Z,22Z,26Z,30E,34E,38E)-undecaprenyl diphosphate (tritrans,heptacis-UPP). It is probably the precursor of glycosyl carrier lipids. The polypeptide is Tritrans,polycis-undecaprenyl-diphosphate synthase (geranylgeranyl-diphosphate specific) (Methanosarcina mazei (strain ATCC BAA-159 / DSM 3647 / Goe1 / Go1 / JCM 11833 / OCM 88) (Methanosarcina frisia)).